We begin with the raw amino-acid sequence, 391 residues long: ATP-sensitive inward rectifier potassium channel 1 (391 aa).

The Cytoplasmic portion of the chain corresponds to M1–W77. S44 carries the phosphoserine; by SGK1 modification. A helical membrane pass occupies residues R78–V102. Topologically, residues A103–G127 are extracellular. N-linked (GlcNAc...) asparagine glycosylation occurs at N117. Residues M128–Q139 constitute an intramembrane region (helical; Pore-forming). The pore-forming intramembrane region spans V140–F146. Positions T141–F146 match the Selectivity filter motif. Topologically, residues R147–T155 are extracellular. A helical transmembrane segment spans residues A156–A177. Topologically, residues I178–M391 are cytoplasmic. Residues A180–L207 are polyphosphoinositide (PIP2)-binding. G223–L230 is a binding site for ATP.

This sequence belongs to the inward rectifier-type potassium channel (TC 1.A.2.1) family. KCNJ1 subfamily. In terms of assembly, interacts with SGK1 and SLC9A3R2/NHERF2. Phosphorylation at Ser-44 by SGK1 is necessary for its expression at the cell membrane. Mainly in kidney (renal cortex, medulla and papilla). As to expression, kidney.

It is found in the cell membrane. The catalysed reaction is K(+)(in) = K(+)(out). Its activity is regulated as follows. Inhibited by WNK3. Activated by phosphatidylinositol 4,5 biphosphate (PtdIns(4,5)P2). In terms of biological role, inward rectifier potassium channels are characterized by a greater tendency to allow potassium to flow into the cell rather than out of it. Their voltage dependence is regulated by the concentration of extracellular potassium; as external potassium is raised, the voltage range of the channel opening shifts to more positive voltages. The inward rectification is mainly due to the blockage of outward current by internal magnesium. This channel is activated by internal ATP and can be blocked by external barium. In the kidney, probably plays a major role in potassium homeostasis. Functionally, inward rectifier potassium channels are characterized by a greater tendency to allow potassium to flow into the cell rather than out of it. Their voltage dependence is regulated by the concentration of extracellular potassium; as external potassium is raised, the voltage range of the channel opening shifts to more positive voltages. The sequence is that of ATP-sensitive inward rectifier potassium channel 1 (Kcnj1) from Rattus norvegicus (Rat).